A 321-amino-acid chain; its full sequence is MTKYALVGDVGGTNARLALCDIASGEISQAKTYSGLDYPSLEAVVRVYLDEHSVNVEDGCIAIACPITGDWVAMTNHTWAFSIAEMKKNLGFSHLEIINDFTAVSMAIPMLKKEHLIQFGGGEPVDGKPIAVYGAGTGLGVAHLVHVDKRWISLPGEGGHVDFAPNSEEEAMILEILRAEIGHVSAERVLSGPGLVNLYRAIVKSDNRLPENLRPKDITERALADSCIDCRRALSLFCVIMGRFGGDLALTMGTFGGVYIAGGIVPRFLEFFKASGFRGGFEDKGRFKDYVHGIPVYLIVHDNPGLLGSGAHLRQTLGHIL.

Residue 8-13 participates in ATP binding; it reads GDVGGT.

Belongs to the bacterial glucokinase family.

It is found in the cytoplasm. It carries out the reaction D-glucose + ATP = D-glucose 6-phosphate + ADP + H(+). This is Glucokinase from Salmonella schwarzengrund (strain CVM19633).